The primary structure comprises 233 residues: Large ribosomal subunit protein uL1 (233 aa).

Belongs to the universal ribosomal protein uL1 family. In terms of assembly, part of the 50S ribosomal subunit.

Binds directly to 23S rRNA. The L1 stalk is quite mobile in the ribosome, and is involved in E site tRNA release. Functionally, protein L1 is also a translational repressor protein, it controls the translation of the L11 operon by binding to its mRNA. This Zymomonas mobilis subsp. mobilis (strain ATCC 31821 / ZM4 / CP4) protein is Large ribosomal subunit protein uL1.